The chain runs to 280 residues: Fructose-1,6-bisphosphatase/inositol-1-monophosphatase (280 aa).

4 residues coordinate Mg(2+): glutamate 73, aspartate 94, leucine 96, and aspartate 97. Substrate-binding positions include 97–99 (DGT), arginine 195, valine 200, and arginine 219. Aspartate 226 contacts Mg(2+).

Belongs to the inositol monophosphatase superfamily. FBPase class 4 family. Mg(2+) is required as a cofactor.

The catalysed reaction is beta-D-fructose 1,6-bisphosphate + H2O = beta-D-fructose 6-phosphate + phosphate. It catalyses the reaction a myo-inositol phosphate + H2O = myo-inositol + phosphate. Functionally, phosphatase with broad specificity; it can dephosphorylate fructose 1,6-bisphosphate, and both D and L isomers of inositol-1-phosphate (I-1-P). This chain is Fructose-1,6-bisphosphatase/inositol-1-monophosphatase (suhB), found in Methanothermobacter thermautotrophicus (strain ATCC 29096 / DSM 1053 / JCM 10044 / NBRC 100330 / Delta H) (Methanobacterium thermoautotrophicum).